We begin with the raw amino-acid sequence, 320 residues long: Cytochrome f (320 aa).

The signal sequence occupies residues 1–35 (MNFFTHKKNNFGSFVTIFSFLVALGVTNLTPAAEA). Residues Y36, C56, C59, and H60 each contribute to the heme site. The chain crosses the membrane as a helical span at residues 286–306 (IQGLLVFFATVLFAQVLLVLK).

Belongs to the cytochrome f family. As to quaternary structure, the 4 large subunits of the cytochrome b6-f complex are cytochrome b6, subunit IV (17 kDa polypeptide, petD), cytochrome f and the Rieske protein, while the 4 small subunits are PetG, PetL, PetM and PetN. The complex functions as a dimer. Heme serves as cofactor.

The protein localises to the plastid. It is found in the chloroplast thylakoid membrane. In terms of biological role, component of the cytochrome b6-f complex, which mediates electron transfer between photosystem II (PSII) and photosystem I (PSI), cyclic electron flow around PSI, and state transitions. This is Cytochrome f from Tetradesmus obliquus (Green alga).